Consider the following 843-residue polypeptide: Tetratricopeptide repeat protein 7B (843 aa).

A TPR 1 repeat occupies 97–131 (QESNLVMAKLTYVEGDYKEALNIYARVGLDDLPLT). Phosphoserine occurs at positions 160 and 202. 6 TPR repeats span residues 219–252 (ETGLQRAHVLYFKNGNLTRGVGRFRELLRAVETR), 363–396 (SVVYDLLTIALGRRGQYEMLSECLERAMKFAFEE), 397–430 (FHLWYQFALSLMAAGKSARAVKVLKECIRLKPDD), 479–514 (TYSLQATDASLRGMQEGLQRKALLAFQRAHSLSPTD), 516–548 (QAAFYLALQLAISRQIPEALGYVRQALQLQGDD), and 549–582 (ANSLHLLALLLSAQKHYHDALNIIDMALSEYPEN). A phosphoserine mark is found at Ser-625, Ser-629, Ser-630, Ser-673, Ser-677, Ser-678, and Ser-681. TPR repeat units lie at residues 696-729 (AQIWLHAAEVYIGIGKPAEATACTQEAANLFPMS), 730-763 (HNVLYMRGQVAELRGHFDEARRWYEEALSISPTH), 765-797 (KSMQRLALVLHQLGRYSLAEKILRDAVQVNSTA), and 798-831 (HEVWNGLGEVLQAQGNDAAATECFLTALELEASS).

Component of a phosphatidylinositol 4-kinase (PI4K) complex, composed of PI4KA, EFR3 (EFR3A or EFR3B), TTC7 (TTC7A or TTC7B) and HYCC (HYCC1 or HYCC2). Interacts with PI4KA, interaction is direct. Interacts with EFR3 (EFR3A or EFR3B), interaction is direct. Interacts with HYCC (HYCC1 or HYCC2), interaction is direct. Association with the PI4K complex is strongly reduced by TMEM150A.

Its subcellular location is the cytoplasm. It is found in the cytosol. It localises to the cell membrane. Component of a complex required to localize phosphatidylinositol 4-kinase (PI4K) to the plasma membrane. The complex acts as a regulator of phosphatidylinositol 4-phosphate (PtdIns(4)P) synthesis. In the complex, plays a central role in bridging PI4KA to EFR3B and HYCC1, via direct interactions. In Mus musculus (Mouse), this protein is Tetratricopeptide repeat protein 7B.